The chain runs to 578 residues: Putative diflavin flavoprotein A 2 (578 aa).

The segment at 39–233 is zinc metallo-hydrolase; it reads QQGTTSNSYL…PPPRLYAPAH (195 aa). Residues 262-404 form the Flavodoxin-like domain; sequence VALFYASAYG…AANEFAQALK (143 aa). The tract at residues 429-578 is flavodoxin-reductase-like; sequence VNRVVGSLCV…TAIQHRKTSS (150 aa).

This sequence in the N-terminal section; belongs to the zinc metallo-hydrolase group 3 family. The protein in the C-terminal section; belongs to the flavodoxin reductase family. Fe cation serves as cofactor.

Its function is as follows. Mediates electron transfer from NADH to oxygen, reducing it to water. This modular protein has 3 redox cofactors, in other organisms the same activity requires 2 or 3 proteins. In Thermosynechococcus vestitus (strain NIES-2133 / IAM M-273 / BP-1), this protein is Putative diflavin flavoprotein A 2 (dfa2).